A 785-amino-acid chain; its full sequence is Uncoating factor OPG117 (785 aa).

The active site involves aspartate 170. A primase region spans residues 342–469; it reads TERGDHIVWI…ELINIINDIQ (128 aa). One can recognise an SF3 helicase domain in the interval 477 to 639; the sequence is KNRELYEKTL…FSQPSGREAA (163 aa). ATP is bound at residue 503-510; sequence GETATGKS.

It belongs to the orthopoxvirus OPG117 family. Homomultimer; hexamer. Interacts with OPG148.

The protein resides in the host cytoplasm. Its function is as follows. Multifunctional protein required for genome uncoating and replication. Major viral uncoating protein that is required for the release of the viral genome from incoming viral cores containing the viral DNA genome. Possesses an ATPase activity that is required for hexamerization and uncoating. The protein is Uncoating factor OPG117 (OPG117) of Variola virus (isolate Human/India/Ind3/1967) (VARV).